The sequence spans 572 residues: Probable serine/threonine-protein kinase At1g54610 (572 aa).

The segment at 1 to 89 (MGCVFGREAA…SNPSKHWRGE (89 aa)) is disordered. Residues 9 to 40 (AATTTTAEAKQAKSSKASSGVVVVGESSVTKS) show a composition bias toward low complexity. Residues 47–67 (DVEKKKNEEANGDKERKSSKG) are compositionally biased toward basic and acidic residues. Residues 74-83 (KPNPRLSNPS) show a composition bias toward polar residues. Residues 118 to 402 (FEKIDKIGQG…ASAALKSEFF (285 aa)) form the Protein kinase domain. ATP-binding positions include 124 to 132 (IGQGTYSNV) and K147. The Proton acceptor role is filled by D242. Disordered regions lie at residues 409-474 (CEPA…NVDR) and 526-572 (SSFN…AVVA). The segment covering 419-434 (PSKEIDAKRRDEETRR) has biased composition (basic and acidic residues). Basic residues predominate over residues 554–572 (SRKKKDNTKSSKGKRAVVA).

This sequence belongs to the protein kinase superfamily. Ser/Thr protein kinase family.

The catalysed reaction is L-seryl-[protein] + ATP = O-phospho-L-seryl-[protein] + ADP + H(+). It catalyses the reaction L-threonyl-[protein] + ATP = O-phospho-L-threonyl-[protein] + ADP + H(+). The chain is Probable serine/threonine-protein kinase At1g54610 from Arabidopsis thaliana (Mouse-ear cress).